Consider the following 141-residue polypeptide: Acetyltransferase ECA0875 (141 aa).

One can recognise an N-acetyltransferase domain in the interval 1–141 (MEIRIFRQDD…GKRLIEDREY (141 aa)).

It belongs to the acetyltransferase family. YpeA subfamily.

The protein is Acetyltransferase ECA0875 of Pectobacterium atrosepticum (strain SCRI 1043 / ATCC BAA-672) (Erwinia carotovora subsp. atroseptica).